The chain runs to 236 residues: F-box and leucine-rich protein 22 (236 aa).

Positions 1–46 (MHITQLNRECLLCLFSFLDKDSRRSLSRTCSQLRDVFEDPTLWPLL) constitute an F-box domain. LRR repeat units follow at residues 15–40 (FSFLDKDSRRSLSRTCSQLRDVFEDP), 43–72 (WPLLHFHSLAELKKDNFRLSPALRSLSICW), 98–123 (HESLVNDFLLQVCNRCPNLTSVTLSG), 124–149 (CGHVTDDCLARLLLSCPRLRTLRLEN), 150–175 (CARVTNRTLAAVAAHGRALQTLHVDF), and 176–201 (CRNVSAAGLLRLRAACPNLRLSAERS).

Directly interacts with SKP1 and CUL1. As to expression, enriched in cardiac muscle (at protein level).

It is found in the cytoplasm. Its subcellular location is the myofibril. The protein localises to the sarcomere. It localises to the z line. It participates in protein modification; protein ubiquitination. Its function is as follows. Substrate-recognition component of the SCF (SKP1-CUL1-F-box protein)-type E3 ubiquitin ligase complex. Promotes ubiquitination of sarcomeric proteins alpha-actinin-2 (ACTN2) and filamin-C (FLNC). This chain is F-box and leucine-rich protein 22 (Fbxl22), found in Mus musculus (Mouse).